The primary structure comprises 148 residues: uncharacterized protein (148 aa).

A run of 4 helical transmembrane segments spans residues 29-49 (FSLV…AAKE), 61-81 (PIIL…PLVM), 99-119 (FIVF…NGFL), and 121-141 (ILVS…TLCI).

It is found in the cell membrane. This is an uncharacterized protein from Bacillus subtilis (strain 168).